The chain runs to 254 residues: Imidazole glycerol phosphate synthase subunit HisF (254 aa).

Active-site residues include aspartate 11 and aspartate 130.

Belongs to the HisA/HisF family. Heterodimer of HisH and HisF.

Its subcellular location is the cytoplasm. It catalyses the reaction 5-[(5-phospho-1-deoxy-D-ribulos-1-ylimino)methylamino]-1-(5-phospho-beta-D-ribosyl)imidazole-4-carboxamide + L-glutamine = D-erythro-1-(imidazol-4-yl)glycerol 3-phosphate + 5-amino-1-(5-phospho-beta-D-ribosyl)imidazole-4-carboxamide + L-glutamate + H(+). It functions in the pathway amino-acid biosynthesis; L-histidine biosynthesis; L-histidine from 5-phospho-alpha-D-ribose 1-diphosphate: step 5/9. In terms of biological role, IGPS catalyzes the conversion of PRFAR and glutamine to IGP, AICAR and glutamate. The HisF subunit catalyzes the cyclization activity that produces IGP and AICAR from PRFAR using the ammonia provided by the HisH subunit. The polypeptide is Imidazole glycerol phosphate synthase subunit HisF (Chromobacterium violaceum (strain ATCC 12472 / DSM 30191 / JCM 1249 / CCUG 213 / NBRC 12614 / NCIMB 9131 / NCTC 9757 / MK)).